The sequence spans 476 residues: MASPFSGALQLTDLDDFIGPSQECIKPVKVEKRAGSGVAKIRIEDDGSYFQINQDGGTRRLEKAKVSLNDCLACSGCITSAETVLITQQSHEELKKVLDANKMVAPSQQRLVVVSVSPQSRASLAARFQLNPTDTARKLTSFFKKIGVHFVFDTAFSRHFSLLESQREFVRRFRGQADCKQALPLLASACPGWICYAEKTHGSFILPHISTARSPQQVMGSLVKDFFAQQQHLTPDKIYHVTVMPCYDKKLEASRPDFFNQEHQTRDVDCVLTTGEVFRLLEEEGVSLPDLEPAPLDSLCSGASAEEPTSHRGGGSGGYLEHVFRHAARELFGIHVAEVTYKPLRNKDFQEVTLEKEGQVLLHLAMAYGFRNIQNLVQRLKRGRCPYHYVEVMACPSGCLNGGGQLQAPDRPSRELLQHVERLYGMVRAEAPEDAPGVQELYTHWLQGTDSECAGRLLHTQYHAVEKASTGLGIRW.

An N-acetylalanine modification is found at alanine 2. The [4Fe-4S] cluster site is built by cysteine 24, cysteine 71, cysteine 74, cysteine 77, cysteine 190, cysteine 246, cysteine 395, and cysteine 399.

The protein belongs to the NARF family. In terms of assembly, external component of the CIA complex. In the CIA complex, interacts directly with CIAO1 and MMS19.

Component of the cytosolic iron-sulfur protein assembly (CIA) complex, a multiprotein complex that mediates the incorporation of iron-sulfur cluster into extramitochondrial Fe/S proteins. Seems to negatively regulate the level of HIF1A expression, although this effect could be indirect. The polypeptide is Cytosolic iron-sulfur assembly component 3 (Pongo abelii (Sumatran orangutan)).